The following is a 331-amino-acid chain: Beta-ketoacyl-[acyl-carrier-protein] synthase III (331 aa).

Active-site residues include C113 and H256. The ACP-binding stretch occupies residues 257–261 (QANKR). The active site involves N286.

Belongs to the thiolase-like superfamily. FabH family. As to quaternary structure, homodimer.

The protein localises to the cytoplasm. The enzyme catalyses malonyl-[ACP] + acetyl-CoA + H(+) = 3-oxobutanoyl-[ACP] + CO2 + CoA. Its pathway is lipid metabolism; fatty acid biosynthesis. In terms of biological role, catalyzes the condensation reaction of fatty acid synthesis by the addition to an acyl acceptor of two carbons from malonyl-ACP. Catalyzes the first condensation reaction which initiates fatty acid synthesis and may therefore play a role in governing the total rate of fatty acid production. Possesses both acetoacetyl-ACP synthase and acetyl transacylase activities. Its substrate specificity determines the biosynthesis of branched-chain and/or straight-chain of fatty acids. In Solibacter usitatus (strain Ellin6076), this protein is Beta-ketoacyl-[acyl-carrier-protein] synthase III.